The chain runs to 230 residues: Potassium/proton antiporter CemA (230 aa).

The next 4 membrane-spanning stretches (helical) occupy residues 7–27 (LPSL…SFSF), 106–126 (IILH…FFFL), 145–165 (LNDS…VGFH), and 181–201 (LGWA…PVIL).

It belongs to the CemA family.

It localises to the plastid. Its subcellular location is the chloroplast inner membrane. It carries out the reaction K(+)(in) + H(+)(out) = K(+)(out) + H(+)(in). In terms of biological role, contributes to K(+)/H(+) antiport activity by supporting proton efflux to control proton extrusion and homeostasis in chloroplasts in a light-dependent manner to modulate photosynthesis. Prevents excessive induction of non-photochemical quenching (NPQ) under continuous-light conditions. Indirectly promotes efficient inorganic carbon uptake into chloroplasts. In Lolium perenne (Perennial ryegrass), this protein is Potassium/proton antiporter CemA.